The primary structure comprises 263 residues: Non-functional protein STAY-GREEN, chloroplastic (263 aa).

The N-terminal 54 residues, 1–54 (MDTLTSAPLLTSKFKPSFSPQQKPCFPHRRRFENGKKKQSIVPVARLFGPAIFE), are a transit peptide targeting the chloroplast.

This sequence belongs to the staygreen family.

The protein localises to the plastid. It is found in the chloroplast. Its function is as follows. Non-functional protein probably interfering with the disassembling mechanism of the intact light-harvesting complex of photosystem II (LHCII) in the thylakoid membranes. Responsible for a stay-green phenotype. The chain is Non-functional protein STAY-GREEN, chloroplastic (SGR) from Pisum sativum (Garden pea).